We begin with the raw amino-acid sequence, 510 residues long: 2,3-bisphosphoglycerate-independent phosphoglycerate mutase (510 aa).

Mn(2+) contacts are provided by Asp13 and Ser63. The Phosphoserine intermediate role is filled by Ser63. Substrate contacts are provided by residues His124, 154 to 155, Arg186, Arg192, 262 to 265, and Lys334; these read RD and RADR. The Mn(2+) site is built by Asp401, His405, Asp442, His443, and His461.

It belongs to the BPG-independent phosphoglycerate mutase family. Monomer. The cofactor is Mn(2+).

The catalysed reaction is (2R)-2-phosphoglycerate = (2R)-3-phosphoglycerate. It participates in carbohydrate degradation; glycolysis; pyruvate from D-glyceraldehyde 3-phosphate: step 3/5. In terms of biological role, catalyzes the interconversion of 2-phosphoglycerate and 3-phosphoglycerate. The sequence is that of 2,3-bisphosphoglycerate-independent phosphoglycerate mutase from Vibrio parahaemolyticus serotype O3:K6 (strain RIMD 2210633).